We begin with the raw amino-acid sequence, 382 residues long: ORC1-type DNA replication protein 1 (382 aa).

Residues 63-67, Tyr205, and Arg217 contribute to the ATP site; that span reads TGKTA.

Belongs to the CDC6/cdc18 family. In terms of assembly, monomer. Interacts with MCM via the WH domain. Post-translationally, autophosphorylated on a serine. Phosphorylation is stimulated by binding to MCM. Both single-stranded DNA and double-stranded DNA inhibit the phosphorylation reaction.

Functionally, involved in regulation of DNA replication. May play an essential role in origin recognition. Binds to DNA, with a preference for origin-specific double-stranded sequences. Does not bind single-stranded DNA. Inhibits MCM helicase activity but does not affect its oligomeric state. This chain is ORC1-type DNA replication protein 1 (cdc6-1), found in Methanothermobacter thermautotrophicus (strain ATCC 29096 / DSM 1053 / JCM 10044 / NBRC 100330 / Delta H) (Methanobacterium thermoautotrophicum).